The primary structure comprises 130 residues: Inner membrane protein YqjF (130 aa).

At 1–5 the chain is on the cytoplasmic side; the sequence is MKKLE. Residues 6–26 traverse the membrane as a helical segment; the sequence is DVGVLVARILMPILFITAGWG. Residues 27–45 lie on the Periplasmic side of the membrane; sequence KITGYAGTQQYMEAMGVPG. Residues 46-66 traverse the membrane as a helical segment; that stretch reads FMLPLVILLEFGGGLAILFGF. Topologically, residues 67–70 are cytoplasmic; that stretch reads LTRT. A helical transmembrane segment spans residues 71–91; it reads TALFTAGFTLLTAFLFHSNFA. Residues 92 to 101 are Periplasmic-facing; the sequence is EGVNSLMFMK. Residues 102–122 traverse the membrane as a helical segment; sequence NLTISGGFLLLAITGPGAYSI. Over 123 to 130 the chain is Cytoplasmic; the sequence is DRLLNKKW.

It belongs to the DoxX family.

It is found in the cell inner membrane. The protein is Inner membrane protein YqjF (yqjF) of Escherichia coli (strain K12).